A 154-amino-acid polypeptide reads, in one-letter code: Putative F-box protein At2g11200 (154 aa).

An F-box domain is found at 5–51 (TTAMSDLPRDLEEEVLSRVQLASLRAVRTTCKKWNRRLSKYRFTKKY).

In Arabidopsis thaliana (Mouse-ear cress), this protein is Putative F-box protein At2g11200.